The following is a 1354-amino-acid chain: Rho-associated protein kinase 1 (1354 aa).

Position 2 is an N-acetylserine (Ser-2). A Protein kinase domain is found at 76 to 338 (YEVVKVIGRG…VEEIKRHLFF (263 aa)). ATP is bound by residues 82–90 (IGRGAFGEV) and Lys-105. Catalysis depends on Asp-198, which acts as the Proton acceptor. Residues 341–409 (DQWAWETLRD…YSNRRYLSPA (69 aa)) enclose the AGC-kinase C-terminal domain. An interaction with FHOD1 region spans residues 368-727 (FDDLEEDKGD…KKLKEEREAR (360 aa)). The stretch at 422–692 (KSLQENLQKT…RLEQEVNEHK (271 aa)) forms a coiled coil. In terms of domain architecture, REM-1 spans 479–556 (STVSQIEKEK…LEEANDLLRT (78 aa)). Positions 707–946 (EAKSVAMCEM…AVSRLEETNS (240 aa)) are SHROOM3 binding. The RhoBD domain maps to 949-1015 (TKDIELLRKE…LAEIMNRKDF (67 aa)). An RHOA binding region spans residues 998-1010 (LKTQAVNKLAEIM). Positions 1011–1102 (NRKDFKIDKK…KLSDLSDSTS (92 aa)) form a coiled coil. A disordered region spans residues 1101 to 1120 (TSVASFPSADETDPNLPESR). 2 positions are modified to phosphoserine: Ser-1105 and Ser-1108. Positions 1115–1354 (NLPESRIEGW…VVKNTSGKTS (240 aa)) are auto-inhibitory. A PH domain is found at 1118–1317 (ESRIEGWLSV…WVTHLVKKIP (200 aa)). A Phorbol-ester/DAG-type zinc finger spans residues 1228 to 1283 (GHEFIPTLYHFPANCEACAKPLWHVFKPPPALECRRCHVKCHRDHLDKKEDLISPC). Ser-1328 carries the post-translational modification Phosphoserine. Residues 1333–1354 (STRSTANQSFRKVVKNTSGKTS) are disordered.

This sequence belongs to the protein kinase superfamily. AGC Ser/Thr protein kinase family. As to quaternary structure, homodimer. Interacts with RHOA (activated by GTP), RHOB, RHOC, GEM, MYLC2B, RHOE, PPP1R12A, LIMK1, LIMK2, TSG101, CHORDC1, DAPK3, PFN1, PTEN and JIP3. Interacts with FHOD1 in a Src-dependent manner. Interacts with ITGB1BP1 (via N-terminus and PTB domain). Interacts with SHROOM3. Requires Mg(2+) as cofactor. Autophosphorylated on serine and threonine residues. Post-translationally, cleaved by caspase-3 during apoptosis. This leads to constitutive activation of the kinase and membrane blebbing. As to expression, detected in corneal epithelium.

It localises to the cytoplasm. Its subcellular location is the cytoskeleton. The protein resides in the microtubule organizing center. The protein localises to the centrosome. It is found in the centriole. It localises to the golgi apparatus membrane. Its subcellular location is the cell projection. The protein resides in the bleb. The protein localises to the cell membrane. It is found in the lamellipodium. It localises to the ruffle. The enzyme catalyses L-seryl-[protein] + ATP = O-phospho-L-seryl-[protein] + ADP + H(+). The catalysed reaction is L-threonyl-[protein] + ATP = O-phospho-L-threonyl-[protein] + ADP + H(+). Its activity is regulated as follows. Activated by RHOA binding. Inhibited by Y-27632. Functionally, protein kinase which is a key regulator of the actin cytoskeleton and cell polarity. Involved in regulation of smooth muscle contraction, actin cytoskeleton organization, stress fiber and focal adhesion formation, neurite retraction, cell adhesion and motility via phosphorylation of DAPK3, GFAP, LIMK1, LIMK2, MYL9/MLC2, TPPP, PFN1 and PPP1R12A. Phosphorylates FHOD1 and acts synergistically with it to promote SRC-dependent non-apoptotic plasma membrane blebbing. Phosphorylates JIP3 and regulates the recruitment of JNK to JIP3 upon UVB-induced stress. Acts as a suppressor of inflammatory cell migration by regulating PTEN phosphorylation and stability. Acts as a negative regulator of VEGF-induced angiogenic endothelial cell activation. Required for centrosome positioning and centrosome-dependent exit from mitosis. Plays a role in terminal erythroid differentiation. Inhibits podocyte motility via regulation of actin cytoskeletal dynamics and phosphorylation of CFL1. Promotes keratinocyte terminal differentiation. Involved in osteoblast compaction through the fibronectin fibrillogenesis cell-mediated matrix assembly process, essential for osteoblast mineralization. May regulate closure of the eyelids and ventral body wall by inducing the assembly of actomyosin bundles. The chain is Rho-associated protein kinase 1 (ROCK1) from Oryctolagus cuniculus (Rabbit).